The following is a 583-amino-acid chain: Fumarate reductase flavoprotein subunit (583 aa).

FAD-binding positions include 11–15 (GGGGA), 35–37 (VSK), 43–51 (SHTVSAEGG), 155–157 (WFA), and Asp211. His44 carries the post-translational modification Tele-8alpha-FAD histidine. Catalysis depends on residues His232 and Arg248. Residues 353–354 (HY), Glu377, and 388–394 (RLGSNSL) each bind FAD.

The protein belongs to the FAD-dependent oxidoreductase 2 family. FRD/SDH subfamily. As to quaternary structure, part of an enzyme complex containing four subunits: a flavoprotein (FrdA), an iron-sulfur protein (FrdB), and two hydrophobic anchor proteins (FrdC and FrdD). It depends on FAD as a cofactor.

It localises to the cell membrane. It catalyses the reaction a quinone + succinate = fumarate + a quinol. The catalysed reaction is a menaquinone + succinate = a menaquinol + fumarate. This chain is Fumarate reductase flavoprotein subunit (frdA), found in Mycobacterium tuberculosis (strain CDC 1551 / Oshkosh).